Consider the following 400-residue polypeptide: MPFPLASQGSQQSQKTYGITSPISLATPKDTDCTLTQKLIETLKPYGVFEEEDELQHRILSLGKLNNLVKEWIREISELKNLPQSVIENVGGKIFTFGSYRLGVHTKGADIDALCVAPRHVDRSDLFSSFYEKLKQQEEVKDLRSVEEAFVPVIKLCFDGIEIDILFARLALQTIPEDLDLRDDSLLKNLDIRCIRSLNGCRVTDEILHLVPNIDSFRLTLRAIKLWAKRHNIYSNILGFLGGVSWAMLVARTCQLYPNAIASTLVHKFFLVFSKWEWPNPVLLKQPEECNLNLPVWDPRVNPSDRYHLMPIITPAYPQQNSTYNVSVSTRAVMVEEFKQGLAITDEILLLKAEWSKLFDAPNFFQKYKYVFYNLLAMFAWGEIINKNKKRCYTLKKKKK.

Residues 97–99 (FGS), T106, 110–112 (DID), D164, K225, Y234, and 243–244 (GV) contribute to the ATP site. Residues D110, D112, and D164 each contribute to the Mg(2+) site. A Nuclear localization signal motif is present at residues 382–390 (GEIINKNKK).

It belongs to the poly(A) polymerase family. Monomer. It depends on Mg(2+) as a cofactor. Mn(2+) serves as cofactor.

It localises to the nucleus. It catalyses the reaction RNA(n) + ATP = RNA(n)-3'-adenine ribonucleotide + diphosphate. Polymerase that creates the 3'-poly(A) tail of mRNA's. May acquire specificity through interaction with a cleavage and polyadenylation factor (CPSF). This Xenopus laevis (African clawed frog) protein is Poly(A) polymerase type 3.